Here is a 297-residue protein sequence, read N- to C-terminus: UTP--glucose-1-phosphate uridylyltransferase (297 aa).

The protein belongs to the UDPGP type 2 family.

The enzyme catalyses alpha-D-glucose 1-phosphate + UTP + H(+) = UDP-alpha-D-glucose + diphosphate. It functions in the pathway carbohydrate metabolism; nucleotide-sugar metabolism. It participates in bacterial outer membrane biogenesis; lipopolysaccharide biosynthesis. In terms of biological role, may play a role in stationary phase survival. This is UTP--glucose-1-phosphate uridylyltransferase (galF) from Salmonella typhimurium (strain LT2 / SGSC1412 / ATCC 700720).